Here is a 279-residue protein sequence, read N- to C-terminus: Pantothenate synthetase (279 aa).

Residue 31–38 (MGNLHGGH) coordinates ATP. Residue His-38 is the Proton donor of the active site. Gln-62 lines the (R)-pantoate pocket. Gln-62 contributes to the beta-alanine binding site. Residue 150-153 (GRKD) participates in ATP binding. Gln-156 contributes to the (R)-pantoate binding site. Residues Val-179 and 187-190 (KSSR) contribute to the ATP site.

It belongs to the pantothenate synthetase family. In terms of assembly, homodimer.

The protein resides in the cytoplasm. It carries out the reaction (R)-pantoate + beta-alanine + ATP = (R)-pantothenate + AMP + diphosphate + H(+). It functions in the pathway cofactor biosynthesis; (R)-pantothenate biosynthesis; (R)-pantothenate from (R)-pantoate and beta-alanine: step 1/1. Its function is as follows. Catalyzes the condensation of pantoate with beta-alanine in an ATP-dependent reaction via a pantoyl-adenylate intermediate. The polypeptide is Pantothenate synthetase (Stenotrophomonas maltophilia (strain K279a)).